The following is a 185-amino-acid chain: HTH-type transcriptional regulator Hpr (185 aa).

Positions 13–157 constitute an HTH marR-type domain; sequence AMIFSQRIAQ…LIAILRNIYG (145 aa). A DNA-binding region (H-T-H motif) is located at residues 63–86; sequence ISEIAKFGVMHVSTAFNFSKKLEE.

As to quaternary structure, homodimer.

Functionally, negative regulator of protease production and sporulation. This is HTH-type transcriptional regulator Hpr from Bacillus cytotoxicus (strain DSM 22905 / CIP 110041 / 391-98 / NVH 391-98).